Here is a 244-residue protein sequence, read N- to C-terminus: Krueppel-like factor 9 (244 aa).

Disordered regions lie at residues 24–51 (VPEH…GDPG) and 79–143 (PSVC…EKRH). Basic and acidic residues predominate over residues 32–51 (DAERLRLPEREVTKEHGDPG). Ser-122 carries the post-translational modification Phosphoserine. The segment covering 134 to 143 (KGKHASEKRH) has biased composition (basic residues). 3 consecutive C2H2-type zinc fingers follow at residues 143–167 (HKCP…YRVH), 173–197 (FPCT…YRTH), and 203–225 (FRCP…ARRH).

This sequence belongs to the Sp1 C2H2-type zinc-finger protein family. As to quaternary structure, interacts with ZZEF1.

It localises to the nucleus. In terms of biological role, transcription factor that binds to GC box promoter elements. Selectively activates mRNA synthesis from genes containing tandem repeats of GC boxes but represses genes with a single GC box. Acts as an epidermal circadian transcription factor regulating keratinocyte proliferation. This is Krueppel-like factor 9 (Klf9) from Rattus norvegicus (Rat).